The sequence spans 374 residues: Translocating chain-associated membrane protein 1 (374 aa).

The Cytoplasmic segment spans residues 2–29 (AIRKKSTKSPPVLSHEFILQNHADIVSC). The chain crosses the membrane as a helical span at residues 30–50 (VAMVFLLGLMFEITAKASIIF). The Lumenal segment spans residues 51 to 76 (VTLQYNVTLPATEEQATESTSLYYYG). N-linked (GlcNAc...) asparagine glycosylation is present at N56. The chain crosses the membrane as a helical span at residues 77–97 (IKDLATVFFYMLVAIIIHAII). Over 98–121 (QEYVLDKINRRMHFSKTKHSKFNE) the chain is Cytoplasmic. One can recognise a TLC domain in the interval 117 to 326 (SKFNESGQLS…NFQLRRWREH (210 aa)). Residues 122 to 142 (SGQLSAFYLFSCIWGTFILIS) traverse the membrane as a helical segment. Over 143–159 (ENYISDPTILWRAYPHN) the chain is Lumenal. The chain crosses the membrane as a helical span at residues 160–180 (LMTFQMKFFYIAQLAYWFHAF). The Cytoplasmic segment spans residues 181–192 (PELYFQKTKKED). The chain crosses the membrane as a helical span at residues 193–213 (IPRQLVYIGLYLFHIAGAYLL). The Lumenal segment spans residues 214–217 (NLNH). The chain crosses the membrane as a helical span at residues 218–238 (LGLVLLVLHYFVEFLFHISRL). Residues 239-251 (FYFSDEKYQKGFS) are Cytoplasmic-facing. Residues 252 to 272 (LWAVLFVLGRLLTLILSVLTV) form a helical membrane-spanning segment. The Lumenal segment spans residues 273–297 (GFGLARAENQKLDFSAGNFNVLAVR). Residues 298-318 (IAVLASICITQAFMMWKFINF) traverse the membrane as a helical segment. The Cytoplasmic portion of the chain corresponds to 319–374 (QLRRWREHSTFQAPVVKKKPTVTKGRSSRKGTENGVNGTVTSNGADSPRNRKEKSS). Positions 334–347 (VKKKPTVTKGRSSR) are enriched in basic residues. Residues 334 to 374 (VKKKPTVTKGRSSRKGTENGVNGTVTSNGADSPRNRKEKSS) are disordered. Polar residues predominate over residues 352–363 (NGVNGTVTSNGA). S365 carries the phosphoserine modification.

It belongs to the TRAM family. Interacts with SEC61B. May interact with Derlin-1/DERL1. In terms of processing, N-glycosylated.

It is found in the endoplasmic reticulum membrane. Functionally, involved in the translocation of nascent protein chains into or through the endoplasmic reticulum (ER) membrane by facilitating the proper chain positioning at the SEC61 channel. Regulates the exposure of nascent secretory protein chain to the cytosol during translocation into the ER. May affect the phospholipid bilayer in the vicinity of the lateral gate of the SEC61 channel, thereby facilitating ER protein transport. Intimately associates with transmembrane (TM) domain of nascent membrane proteins during the entire integration process into the ER membrane. Associates with the second TM domain of G-protein-coupled receptor opsin/OPSD nascent chain in the ER membrane, which may facilitate its integration into the membrane. Under conditions of ER stress, participates in the disposal of misfolded ER membrane proteins during the unfolded protein response (UPR), an integrated stress response (ISR) pathway, by selectively retrotranslocating misfolded ER-membrane proteins from the ER into the cytosol where they are ubiquitinated and degraded by the proteasome. In Canis lupus familiaris (Dog), this protein is Translocating chain-associated membrane protein 1 (TRAM1).